The sequence spans 313 residues: Porphobilinogen deaminase (313 aa).

S-(dipyrrolylmethanemethyl)cysteine is present on Cys242.

The protein belongs to the HMBS family. Monomer. Dipyrromethane is required as a cofactor.

The enzyme catalyses 4 porphobilinogen + H2O = hydroxymethylbilane + 4 NH4(+). The protein operates within porphyrin-containing compound metabolism; protoporphyrin-IX biosynthesis; coproporphyrinogen-III from 5-aminolevulinate: step 2/4. Functionally, tetrapolymerization of the monopyrrole PBG into the hydroxymethylbilane pre-uroporphyrinogen in several discrete steps. This is Porphobilinogen deaminase from Klebsiella pneumoniae subsp. pneumoniae (strain ATCC 700721 / MGH 78578).